Consider the following 502-residue polypeptide: Probable cytochrome P450 554A1 (502 aa).

The helical transmembrane segment at 3–20 (LLLFIFFLILFYYSVKYY) threads the bilayer. Position 448 (C448) interacts with heme.

Belongs to the cytochrome P450 family. The cofactor is heme.

It localises to the membrane. The chain is Probable cytochrome P450 554A1 (cyp554A1) from Dictyostelium discoideum (Social amoeba).